A 592-amino-acid polypeptide reads, in one-letter code: Pectinesterase/pectinesterase inhibitor 3 (592 aa).

Residues 1–35 form the signal peptide; sequence MAPSMKEIFSKDNFKKNKKLVLLSAAVALLFVAAV. Positions 36 to 238 are cleaved as a propeptide — removed in mature 42 kDa form; that stretch reads AGISAGASKA…KITSNNRKLK (203 aa). Residues 36-273 constitute a propeptide, removed in mature 38 kDa form; that stretch reads AGISAGASKA…WLSAGDRRLL (238 aa). The pectinesterase inhibitor 3 stretch occupies residues 53–212; it reads PSSHAVLRSS…EHMCSNALAM (160 aa). N-linked (GlcNAc...) asparagine glycans are attached at residues asparagine 96 and asparagine 215. The tract at residues 281–578 is pectinesterase 3; the sequence is DATVAADGSG…YTAGQFIGGG (298 aa). 2 residues coordinate substrate: threonine 356 and glutamine 386. The active-site Proton donor; for pectinesterase activity is the aspartate 409. A disulfide bond links cysteine 423 and cysteine 443. The active-site Nucleophile; for pectinesterase activity is aspartate 430. Residues glutamine 454, arginine 498, and tryptophan 500 each coordinate substrate.

This sequence in the N-terminal section; belongs to the PMEI family. The protein in the C-terminal section; belongs to the pectinesterase family. As to quaternary structure, interacts with BIIDXI and At5g11420. Binds reversibly to PMEI4, PMEI7 and PMEI8 to be inhibited; the stability of the PME3-PMEIs complexes and the inhibition of the pectin methylesterase (PME) activity is pH-dependent, based on protonation status of amino-acids at the complex interface. In terms of tissue distribution, expressed in roots, cotyledons, hypocotyls, seedlings, leaves, stems, flowers, dry seeds and siliques. Accumulates in etiolated hypocotyls (at protein level).

Its subcellular location is the secreted. It is found in the extracellular space. The protein resides in the apoplast. It localises to the cell wall. The catalysed reaction is [(1-&gt;4)-alpha-D-galacturonosyl methyl ester](n) + n H2O = [(1-&gt;4)-alpha-D-galacturonosyl](n) + n methanol + n H(+). The protein operates within glycan metabolism; pectin degradation; 2-dehydro-3-deoxy-D-gluconate from pectin: step 1/5. Its activity is regulated as follows. Regulated negatively by pectinesterase inhibitors (e.g. PMEI3, PMEI4, PMEI7 and PMEI9) in a pH-dependent manner, mainly in slightly acidic conditions (pH 6.0 and 5.0), especially in dark-grown hypocotyls; this processus relies on changes in the protonation of amino acids involved in intermolecular and intramolecular interactions. In terms of biological role, acts in the modification of cell walls via demethylesterification of cell wall pectin. Required for zinc Zn(2+) homeostasis and to monitor Zn(2+) influence on cell wall-controlled growth processes such as root cell elongation. Monitors seed germination and favors root hairs production. Prevents cruciferin seed storage proteins activity, but promotes the expression of genes involved in cell wall organization and remodeling as well as genes involved in lipid and protein metabolism, during post-germinative growth of seedlings. Confers sensitivity to Zn(2+) when overexpressed. Acts as a susceptibility factor required for the initial colonization of the host tissue by virulent pathogens including Botrytis cinerea and Pectobacterium carotovorum, probably by facilitating cell wall pectine degradation by pathogen pectic enzymes after its demethylesterification. This is Pectinesterase/pectinesterase inhibitor 3 from Arabidopsis thaliana (Mouse-ear cress).